A 282-amino-acid chain; its full sequence is Putative hydrolase Bamb_4846 (282 aa).

Mg(2+) is bound by residues Glu124, Glu126, and Asp155.

Belongs to the FAH family. Mg(2+) serves as cofactor.

This Burkholderia ambifaria (strain ATCC BAA-244 / DSM 16087 / CCUG 44356 / LMG 19182 / AMMD) (Burkholderia cepacia (strain AMMD)) protein is Putative hydrolase Bamb_4846.